Here is a 1005-residue protein sequence, read N- to C-terminus: MILPNYFQDPNTLHVNTVEHHAYFIPHQQNETALSGKREQSDYFTLLNGQWDFNYFQSYHDLPDNFLDIAFEHKIPVPANWQNHGFDHHHYTNINYPFPFEPPFVPHQNPCGVYHRTLQLTPKHKRYLLNFEGVDSCLFVYVNKQFVGYSQISHNTSEFDVSDYLQAGTNHLTVVVLKWCDGSYLEDQDKFRMSGIFRDVYLLEREQNYLQDFFIQYELDDELRHANLKVETLFSRQPQAIEYQLLNPNGFTVFNQTDTHLNIEVEDIQLWNAEKPQLYTLILHTAEEVIVQKIGFRKVEIKDGILLFNQQPIKFKGVNRHDSDPKTGYAITYAQAHKDLQLMKQHNINAIRTAHYPNAPWFSELCDQYGFYLIGESDVESHGASMLTVKMPEPSILLNHQNDLQTERIRQDMIDNYCYFARDPLFKKAILDRQQANVERDKNRTSIIIWSLGNEAGYGANFEAAAAWIKQRDKSRLVHYESSIYQHSADNNDLSNLDFYSEMYGSTEDIDRYCATAQRKPFVLCEYSHAMGNSNGDAEDYWQAFHRHPQSCGGFVWEWCDHAPYRANGQFGYGGDFGESPHDGNFCMDGLVSPDRIPHSNLLELKNVNRPARAELIDNQIVIHNYLDFTDLADYLTIDYEFVENGVVTSGGNLSVSCKPHSSVILPIELPKNNGHLWLLNLDYRLNTATELLEAEHSLGFEQLNLFSENKLVLPKFTIEKSTFEVQEDHFRINVHNGQFSYQLDKQKGIFSRIEKAGKAIIQQPLDFNIWRAPTDNDRLIREAWQNAGYDKAYTRAYEIQWQQSEQAVEFSVKSAIVSISRGRILTLDIRYRIFNDGQISVEINAIRPTELPYLPRFGLRFWLAKAENTVEYFGYGEQESYVDKHHLANLGIYHTTAKQNHTDYVKPQENGSHYGCEYLKSENLFVSASQPFSFNLSPYTQEELTEKKHYYELQESDYSVLCIDYKMSGIGSNSCGPNLKDQYRLMESEFKIRFDLIFDKTIRQ.

Glutamate 455 acts as the Proton donor in catalysis. Glutamate 526 (nucleophile) is an active-site residue.

This sequence belongs to the glycosyl hydrolase 2 family.

The catalysed reaction is Hydrolysis of terminal non-reducing beta-D-galactose residues in beta-D-galactosides.. In Actinobacillus pleuropneumoniae (Haemophilus pleuropneumoniae), this protein is Beta-galactosidase (lacZ).